We begin with the raw amino-acid sequence, 66 residues long: Small ribosomal subunit protein eS27 (66 aa).

The Zn(2+) site is built by Cys21, Cys24, Cys40, and Cys43. A C4-type zinc finger spans residues 21-43 (CPNCGNEQTIFSHATFPVRCLSC).

Belongs to the eukaryotic ribosomal protein eS27 family. Part of the 30S ribosomal subunit. Zn(2+) serves as cofactor.

The chain is Small ribosomal subunit protein eS27 from Saccharolobus solfataricus (strain ATCC 35092 / DSM 1617 / JCM 11322 / P2) (Sulfolobus solfataricus).